The sequence spans 343 residues: UPF0283 membrane protein blr7254 (343 aa).

3 consecutive transmembrane segments (helical) span residues G64–V84, L97–G117, and I214–L234.

This sequence belongs to the UPF0283 family.

Its subcellular location is the cell inner membrane. The chain is UPF0283 membrane protein blr7254 from Bradyrhizobium diazoefficiens (strain JCM 10833 / BCRC 13528 / IAM 13628 / NBRC 14792 / USDA 110).